The following is a 195-amino-acid chain: Interferon tau-11 (195 aa).

The signal sequence occupies residues 1–23 (MAFVLSLLMALVLVSYGPGGSLG). 2 disulfides stabilise this stretch: cysteine 24/cysteine 122 and cysteine 52/cysteine 162. N-linked (GlcNAc...) asparagine glycosylation occurs at asparagine 101.

The protein belongs to the alpha/beta interferon family. IFN-alphaII subfamily. Constitutively and exclusively expressed in the mononuclear cells of the extraembryonic trophectoderm.

It is found in the secreted. Its function is as follows. Paracrine hormone primarily responsible for maternal recognition of pregnancy. Interacts with endometrial receptors, probably type I interferon receptors, and blocks estrogen receptor expression, preventing the estrogen-induced increase in oxytocin receptor expression in the endometrium. This results in the suppression of the pulsatile endometrial release of the luteolytic hormone prostaglandin F2-alpha, hindering the regression of the corpus luteum (luteolysis) and therefore a return to ovarian cyclicity. This, and a possible direct effect of IFN-tau on prostaglandin synthesis, leads in turn to continued ovarian progesterone secretion, which stimulates the secretion by the endometrium of the nutrients required for the growth of the conceptus. In summary, displays particularly high antiviral and antiproliferative potency concurrently with particular weak cytotoxicity, high antiluteolytic activity and immunomodulatory properties. In contrast with other IFNs, IFN-tau is not virally inducible. The protein is Interferon tau-11 (IFNT11) of Ovis aries (Sheep).